An 882-amino-acid chain; its full sequence is Alanine--tRNA ligase (882 aa).

Zn(2+)-binding residues include His563, His567, Cys665, and His669.

The protein belongs to the class-II aminoacyl-tRNA synthetase family. Requires Zn(2+) as cofactor.

The protein resides in the cytoplasm. It carries out the reaction tRNA(Ala) + L-alanine + ATP = L-alanyl-tRNA(Ala) + AMP + diphosphate. In terms of biological role, catalyzes the attachment of alanine to tRNA(Ala) in a two-step reaction: alanine is first activated by ATP to form Ala-AMP and then transferred to the acceptor end of tRNA(Ala). Also edits incorrectly charged Ser-tRNA(Ala) and Gly-tRNA(Ala) via its editing domain. The sequence is that of Alanine--tRNA ligase from Synechococcus sp. (strain RCC307).